Here is a 672-residue protein sequence, read N- to C-terminus: Nuclear hormone receptor family member nhr-5 (672 aa).

The span at 1–19 shows a compositional bias: low complexity; sequence MSSGGNSSNVNRNSGSSNV. The disordered stretch occupies residues 1 to 38; sequence MSSGGNSSNVNRNSGSSNVITLNDSDEETEDSNLGSSS. A DNA-binding region (nuclear receptor) is located at residues 40–115; it reads TNLCKVCGAE…EGMNPAYVRP (76 aa). 2 consecutive NR C4-type zinc fingers follow at residues 43–63 and 79–98; these read CKVC…CVGC and CAAN…CRSC. The 270-residue stretch at 155–424 folds into the NR LBD domain; sequence EMRTILMTLL…PLLTDLFGCF (270 aa). The segment at 550–577 is disordered; the sequence is NIQGPSHLPQCGSTVTQRPTVPSSTTSS. Residues 562 to 577 show a composition bias toward low complexity; sequence STVTQRPTVPSSTTSS.

It belongs to the nuclear hormone receptor family.

The protein resides in the nucleus. Its function is as follows. Orphan nuclear receptor. This chain is Nuclear hormone receptor family member nhr-5 (nhr-5), found in Caenorhabditis elegans.